A 344-amino-acid polypeptide reads, in one-letter code: Transcription factor AIG1 (344 aa).

In terms of domain architecture, bHLH spans 131-180; the sequence is AASKSHSEAERRRRERINTHLAKLRSILPNTTKTDKASLLAEVIQHMKEL. The tract at residues 313 to 344 is disordered; the sequence is NDESNDNNNLEKSSSGGIKRQRTSKMVNRCYN. Low complexity predominate over residues 318–327; the sequence is DNNNLEKSSS.

In terms of assembly, homodimer. Interacts with LHW.

Its subcellular location is the nucleus. Its function is as follows. Transcription factor required for MONOPTEROS-dependent root initiation in embryo. Transcriptionally controlled by MONOPTEROS. The chain is Transcription factor AIG1 (BHLH32) from Arabidopsis thaliana (Mouse-ear cress).